Reading from the N-terminus, the 91-residue chain is PqqA binding protein (91 aa).

Belongs to the PqqD family. Monomer. Interacts with PqqE.

The protein operates within cofactor biosynthesis; pyrroloquinoline quinone biosynthesis. Functions as a PqqA binding protein and presents PqqA to PqqE, in the pyrroloquinoline quinone (PQQ) biosynthetic pathway. The polypeptide is PqqA binding protein (Pseudomonas entomophila (strain L48)).